Consider the following 90-residue polypeptide: Large ribosomal subunit protein uL23c (90 aa).

The protein belongs to the universal ribosomal protein uL23 family. In terms of assembly, part of the 50S ribosomal subunit.

Its subcellular location is the plastid. The protein localises to the chloroplast. Its function is as follows. Binds to 23S rRNA. This Psilotum nudum (Whisk fern) protein is Large ribosomal subunit protein uL23c (rpl23).